A 345-amino-acid polypeptide reads, in one-letter code: Serine proteinase inhibitor 2 (345 aa).

It belongs to the serpin family. Poxviruses subfamily.

The protein localises to the host cytoplasm. In terms of biological role, viral serpin that inhibits both cysteine and serine proteinases involved in the regulation of host inflammatory and apoptosis processes. Major anti-apoptotic protein which inhibits both intrinsic and extrinsic pathways and strongly cleaves host CASP1 and CASP8 but is a rather poor inhibitor of host CASP3. Prevents the proteolytic activity of host interleukin-1-beta converting enzyme (ICE) and ICE-like enzymes. Can also block apoptosis through host tumor necrosis factor (TNF) receptor. The inhibition of host ICE is an example of a 'cross-class' interaction, in which a serpin inhibits a non-serine proteinase. Also inhibits granzyme B. The chain is Serine proteinase inhibitor 2 (OPG199) from Rabbitpox virus (strain Utrecht) (RPV).